The sequence spans 179 residues: Large ribosomal subunit protein uL6 (179 aa).

It belongs to the universal ribosomal protein uL6 family. As to quaternary structure, part of the 50S ribosomal subunit.

Its function is as follows. This protein binds to the 23S rRNA, and is important in its secondary structure. It is located near the subunit interface in the base of the L7/L12 stalk, and near the tRNA binding site of the peptidyltransferase center. In Pelobacter propionicus (strain DSM 2379 / NBRC 103807 / OttBd1), this protein is Large ribosomal subunit protein uL6.